The following is a 229-amino-acid chain: Protein-lysine N-methyltransferase EFM4 (229 aa).

It belongs to the class I-like SAM-binding methyltransferase superfamily. EFM4 family.

The protein localises to the cytoplasm. It catalyses the reaction L-lysyl-[protein] + S-adenosyl-L-methionine = N(6)-methyl-L-lysyl-[protein] + S-adenosyl-L-homocysteine + H(+). The catalysed reaction is N(6)-methyl-L-lysyl-[protein] + S-adenosyl-L-methionine = N(6),N(6)-dimethyl-L-lysyl-[protein] + S-adenosyl-L-homocysteine + H(+). Its function is as follows. S-adenosyl-L-methionine-dependent protein-lysine N-methyltransferase that mono- and dimethylates elongation factor 1-alpha (TEF1 and TEF2) at 'Lys-316'. May play a role in intracellular transport. The protein is Protein-lysine N-methyltransferase EFM4 of Saccharomyces cerevisiae (strain ATCC 204508 / S288c) (Baker's yeast).